The chain runs to 257 residues: Hydroxyacylglutathione hydrolase (257 aa).

Residues His54, His56, Asp58, His59, His113, Asp137, and His175 each coordinate Zn(2+).

The protein belongs to the metallo-beta-lactamase superfamily. Glyoxalase II family. Monomer. Zn(2+) is required as a cofactor.

It catalyses the reaction an S-(2-hydroxyacyl)glutathione + H2O = a 2-hydroxy carboxylate + glutathione + H(+). It functions in the pathway secondary metabolite metabolism; methylglyoxal degradation; (R)-lactate from methylglyoxal: step 2/2. In terms of biological role, thiolesterase that catalyzes the hydrolysis of S-D-lactoyl-glutathione to form glutathione and D-lactic acid. The chain is Hydroxyacylglutathione hydrolase from Trichormus variabilis (strain ATCC 29413 / PCC 7937) (Anabaena variabilis).